We begin with the raw amino-acid sequence, 555 residues long: Dihydroxy-acid dehydratase (555 aa).

Position 78 (aspartate 78) interacts with Mg(2+). Cysteine 119 provides a ligand contact to [2Fe-2S] cluster. Mg(2+) contacts are provided by aspartate 120 and lysine 121. Lysine 121 carries the N6-carboxylysine modification. Cysteine 192 contacts [2Fe-2S] cluster. A Mg(2+)-binding site is contributed by glutamate 444. The active-site Proton acceptor is serine 470.

This sequence belongs to the IlvD/Edd family. In terms of assembly, homodimer. The cofactor is [2Fe-2S] cluster. It depends on Mg(2+) as a cofactor.

It catalyses the reaction (2R)-2,3-dihydroxy-3-methylbutanoate = 3-methyl-2-oxobutanoate + H2O. It carries out the reaction (2R,3R)-2,3-dihydroxy-3-methylpentanoate = (S)-3-methyl-2-oxopentanoate + H2O. The protein operates within amino-acid biosynthesis; L-isoleucine biosynthesis; L-isoleucine from 2-oxobutanoate: step 3/4. It participates in amino-acid biosynthesis; L-valine biosynthesis; L-valine from pyruvate: step 3/4. Functions in the biosynthesis of branched-chain amino acids. Catalyzes the dehydration of (2R,3R)-2,3-dihydroxy-3-methylpentanoate (2,3-dihydroxy-3-methylvalerate) into 2-oxo-3-methylpentanoate (2-oxo-3-methylvalerate) and of (2R)-2,3-dihydroxy-3-methylbutanoate (2,3-dihydroxyisovalerate) into 2-oxo-3-methylbutanoate (2-oxoisovalerate), the penultimate precursor to L-isoleucine and L-valine, respectively. This Halalkalibacterium halodurans (strain ATCC BAA-125 / DSM 18197 / FERM 7344 / JCM 9153 / C-125) (Bacillus halodurans) protein is Dihydroxy-acid dehydratase.